Reading from the N-terminus, the 481-residue chain is CASP8 and FADD-like apoptosis regulator (481 aa).

2 consecutive DED domains span residues 6-78 (VSAE…RILK) and 97-172 (DYRV…LNTK). Residues 6–200 (VSAEVIHQVE…QASLPKLSIK (195 aa)) form an interaction with CASP8 region. An interaction with FADD region spans residues 6–229 (VSAEVIHQVE…DSQRTLVKTS (224 aa)). Residues 6-307 (VSAEVIHQVE…YASMAQHQDY (302 aa)) form an interaction with CASP8 propeptide region. The interaction with CASP3 stretch occupies residues 197–436 (LSIKYNSRLQ…KLSQQLKQGR (240 aa)). The interval 197 to 481 (LSIKYNSRLQ…LRKKLILAPT (285 aa)) is interaction with TRAF1 and TRAF2. An interaction with CASP8 subunits p18 and p10 region spans residues 219–481 (RDSQRTLVKT…LRKKLILAPT (263 aa)). The interval 265–360 (DTKYLQETFT…RGKPKLFFIQ (96 aa)) is caspase. Positions 372 to 481 (SSLEVDGPSI…LRKKLILAPT (110 aa)) are interaction with CASP8.

The protein belongs to the peptidase C14A family. TNFRSF6 stimulation triggers recruitment to the death-inducing signaling complex (DISC) formed by TNFRSF6, FADD and CASP8. A proteolytic fragment (p43) stays associated with the DISC. Interacts with RIPK1. Post-translationally, proteolytically processed by CASP8 generating subunits p43 and p12. In terms of tissue distribution, highly expressed in heart.

Its function is as follows. Apoptosis regulator protein which may function as a crucial link between cell survival and cell death pathways in mammalian cells. Acts as an inhibitor of TNFRSF6 mediated apoptosis. A proteolytic fragment (p43) is likely retained in the death-inducing signaling complex (DISC) thereby blocking further recruitment and processing of caspase-8 at the complex. Full length and shorter isoforms have been shown either to induce apoptosis or to reduce TNFRSF-triggered apoptosis. Lacks enzymatic (caspase) activity. This chain is CASP8 and FADD-like apoptosis regulator (Cflar), found in Mus musculus (Mouse).